The following is a 687-amino-acid chain: Homoaconitase, mitochondrial (687 aa).

The N-terminal 18 residues, 1–18, are a transit peptide targeting the mitochondrion; the sequence is MFAFRNRAVTQTLLVRRY. Residues C340, C400, and C403 each coordinate [4Fe-4S] cluster. The segment covering 481–490 has biased composition (acidic residues); sequence EAEADAEAAE. The tract at residues 481–500 is disordered; that stretch reads EAEADAEAAESDPAPSGGVL.

Belongs to the aconitase/IPM isomerase family. [4Fe-4S] cluster serves as cofactor.

It localises to the mitochondrion. It catalyses the reaction (2R,3S)-homoisocitrate = cis-homoaconitate + H2O. It participates in amino-acid biosynthesis; L-lysine biosynthesis via AAA pathway; L-alpha-aminoadipate from 2-oxoglutarate: step 3/5. Functionally, catalyzes the reversible hydration of cis-homoaconitate to (2R,3S)-homoisocitrate, a step in the alpha-aminoadipate pathway for lysine biosynthesis. In Yarrowia lipolytica (strain CLIB 122 / E 150) (Yeast), this protein is Homoaconitase, mitochondrial (LYS4).